A 246-amino-acid polypeptide reads, in one-letter code: Bis(5'-nucleosyl)-tetraphosphatase PrpE [asymmetrical] (246 aa).

The protein belongs to the PrpE family. Ni(2+) serves as cofactor.

The catalysed reaction is P(1),P(4)-bis(5'-guanosyl) tetraphosphate + H2O = GMP + GTP + 2 H(+). In terms of biological role, asymmetrically hydrolyzes Ap4p to yield AMP and ATP. The polypeptide is Bis(5'-nucleosyl)-tetraphosphatase PrpE [asymmetrical] (Bacillus cereus (strain ATCC 14579 / DSM 31 / CCUG 7414 / JCM 2152 / NBRC 15305 / NCIMB 9373 / NCTC 2599 / NRRL B-3711)).